Consider the following 267-residue polypeptide: Ribosomal RNA small subunit methyltransferase A (267 aa).

6 residues coordinate S-adenosyl-L-methionine: Asn-18, Leu-20, Gly-45, Glu-66, Asp-91, and Asn-112.

The protein belongs to the class I-like SAM-binding methyltransferase superfamily. rRNA adenine N(6)-methyltransferase family. RsmA subfamily.

The protein localises to the cytoplasm. The enzyme catalyses adenosine(1518)/adenosine(1519) in 16S rRNA + 4 S-adenosyl-L-methionine = N(6)-dimethyladenosine(1518)/N(6)-dimethyladenosine(1519) in 16S rRNA + 4 S-adenosyl-L-homocysteine + 4 H(+). Functionally, specifically dimethylates two adjacent adenosines (A1518 and A1519) in the loop of a conserved hairpin near the 3'-end of 16S rRNA in the 30S particle. May play a critical role in biogenesis of 30S subunits. The protein is Ribosomal RNA small subunit methyltransferase A of Shewanella sediminis (strain HAW-EB3).